Here is a 617-residue protein sequence, read N- to C-terminus: MLVPLAKLSCLAYQCFHALKIKKNYLPLCATRWSSTSTVPRITTHYTIYPRDKDKRWEGVNMERFAEEADVVIVGAGPAGLSAAVRLKQLAVAHEKDIRVCLVEKAAQIGAHTLSGACLDPGAFKELFPDWKEKGAPLNTPVTEDRFGILTEKYRIPVPILPGLPMNNHGNYIVRLGHLVSWMGEQAEALGVEVYPGYAAAEVLFHDDGSVKGIATNDVGIQKDGAPKATFERGLELHAKVTIFAEGCHGHLAKQLYKKFDLRANCEPQTYGIGLKELWVIDEKNWKPGRVDHTVGWPLDRHTYGGSFLYHLNEGEPLVALGLVVGLDYQNPYLSPFREFQRWKHHPSIRPTLEGGKRIAYGARALNEGGFQSIPKLTFPGGLLIGCSPGFMNVPKIKGTHTAMKSGILAAESIFNQLTSENLQSKTIGLHVTEYEDNLKNSWVWKELYSVRNIRPSCHGVLGVYGGMIYTGIFYWILRGMEPWTLKHKGSDFERLKPAKDCTPIEYPKPDGQISFDLLSSVALSGTNHEHDQPAHLTLRDDSIPVNRNLSIYDGPEQRFCPAGVYEFVPVEQGDGFRLQINAQNCVHCKTCDIKDPSQNINWVVPEGGGGPAYNGM.

A mitochondrion-targeting transit peptide spans 1–33 (MLVPLAKLSCLAYQCFHALKIKKNYLPLCATRW). 71-85 (VVIVGAGPAGLSAAV) serves as a coordination point for FAD. Lys-96 carries the N6-acetyllysine modification. An intramembrane segment occupies 109-130 (IGAHTLSGACLDPGAFKELFPD). N6-acetyllysine is present on residues Lys-132 and Lys-223. A ubiquinone-binding residues include Gly-305 and Gly-306. Lys-357 is subject to N6-acetyllysine. An intramembrane segment occupies 428–447 (IGLHVTEYEDNLKNSWVWKE). Residue Ser-551 is modified to Phosphoserine. [4Fe-4S] cluster contacts are provided by Cys-561, Cys-586, Cys-589, and Cys-592. The 4Fe-4S ferredoxin-type domain maps to 577-606 (FRLQINAQNCVHCKTCDIKDPSQNINWVVP).

It belongs to the ETF-QO/FixC family. In terms of assembly, monomer. The cofactor is [4Fe-4S] cluster. FAD is required as a cofactor.

The protein localises to the mitochondrion inner membrane. It carries out the reaction a ubiquinone + reduced [electron-transfer flavoprotein] = a ubiquinol + oxidized [electron-transfer flavoprotein] + H(+). Accepts electrons from ETF and reduces ubiquinone. This is Electron transfer flavoprotein-ubiquinone oxidoreductase, mitochondrial from Homo sapiens (Human).